The following is a 456-amino-acid chain: N(6)-adenosine-methyltransferase non-catalytic subunit METTL14 (456 aa).

Residues 43–74 (EIAETRETSRASYDTSAAVSKRKLPEEGKADE) form a disordered region. The span at 65–74 (KLPEEGKADE) shows a compositional bias: basic and acidic residues. 2 interaction with METTL3 regions span residues 135 to 136 (RD) and 237 to 238 (SG). The tract at residues 245–254 (RMCLRKWGFR) is positively charged region required for RNA-binding. Interaction with METTL3 regions lie at residues 255–258 (RSED) and 278–287 (KAIFQRTKEH). Positions 297–298 (HR) are positively charged region required for RNA-binding. The interval 308–312 (NVDID) is interaction with METTL3. A disordered region spans residues 395-456 (LRPKTPPPKS…GPHRGVFAPR (62 aa)). Residues 410 to 421 (ASRGGGRGGASA) show a composition bias toward gly residues. A compositionally biased stretch (basic and acidic residues) spans 423–441 (RGERGRERNRGSFRGDRGN).

This sequence belongs to the MT-A70-like family. Heterodimer; heterodimerizes with mettl3 to form an antiparallel heterodimer that constitutes an active methyltransferase. Component of the WMM complex, a N6-methyltransferase complex composed of a catalytic subcomplex, named MAC, and of an associated subcomplex, named MACOM. The MAC subcomplex is composed of mettl3 and mettl14.

The protein resides in the nucleus. The METTL3-METTL14 heterodimer forms a N6-methyltransferase complex that methylates adenosine residues at the N(6) position of some mRNAs and regulates the circadian clock, differentiation of embryonic stem cells and cortical neurogenesis. In the heterodimer formed with mettl3, mettl14 constitutes the RNA-binding scaffold that recognizes the substrate rather than the catalytic core. N6-methyladenosine (m6A), which takes place at the 5'-[AG]GAC-3' consensus sites of some mRNAs, plays a role in mRNA stability and processing. In Xenopus laevis (African clawed frog), this protein is N(6)-adenosine-methyltransferase non-catalytic subunit METTL14 (mettl14).